The sequence spans 440 residues: 2-alpha-hydroxytaxane 2-O-benzoyltransferase (440 aa).

Residues histidine 158 and aspartate 367 each act as proton acceptor in the active site.

This sequence belongs to the plant acyltransferase family.

It catalyses the reaction 10-deacetyl-2-debenzoylbaccatin III + benzoyl-CoA = 10-deacetylbaccatin III + CoA. The protein operates within alkaloid biosynthesis; taxol biosynthesis; baccatin III from 10-deacetyl-2-debenzoylbaccatin III: step 1/2. In terms of biological role, catalyzes the conversion of 2-debenzoyl-7,13-diacetylbaccatin III, a semisynthetic substrate, to 7,13-diacetylbaccatin III. In Taxus cuspidata (Japanese yew), this protein is 2-alpha-hydroxytaxane 2-O-benzoyltransferase.